A 548-amino-acid chain; its full sequence is Tyrosine-protein phosphatase non-receptor type 61F (548 aa).

Residues 1 to 525 lie on the Cytoplasmic side of the membrane; sequence MSEQKTSGSG…KQLAAKKRRS (525 aa). The Tyrosine-protein phosphatase domain occupies 33-296; that stretch reads FYKEICETCD…DFSYQAIIEG (264 aa). A disordered region spans residues 46–65; it reads KEKQFSTSESERHTNRGLNR. S83 carries the post-translational modification Phosphoserine. Y86 is subject to Phosphotyrosine. Substrate-binding positions include D203, 237–243, and Q281; that span reads CSAGIGR. C237 (phosphocysteine intermediate) is an active-site residue. 3 consecutive short sequence motifs (PXXP motif (SH3-binding)) follow at residues 327-330, 339-342, and 394-397; these read PPLP and PLAP. Residues 386–517 are disordered; sequence EVADSRPLPP…RKQRENEDKQ (132 aa). Residues 404 to 428 are compositionally biased toward acidic residues; sequence SDSDEDYLLDDDDEDDTDEDEEYET. Short sequence motifs (PXXP motif (SH3-binding)) lie at residues 459–462 and 480–483; these read PAVP and PASP. Over residues 502-517 the composition is skewed to basic and acidic residues; sequence KVNDMKRKQRENEDKQ. Residues 526-545 form a helical membrane-spanning segment; it reads LLTYIAAGVVVGVICAYAYT. At 546 to 548 the chain is on the extracellular side; it reads KLG.

Belongs to the protein-tyrosine phosphatase family. Non-receptor class 1 subfamily. Interacts (via C-terminus) with dock/dreadlocks; this interaction is independent of insulin stimulation and is required for dephosphorylation of the insulin-like receptor InR.

Its subcellular location is the cytoplasm. It localises to the membrane. The protein localises to the endomembrane system. It is found in the nucleus. It catalyses the reaction O-phospho-L-tyrosyl-[protein] + H2O = L-tyrosyl-[protein] + phosphate. Its function is as follows. Non-receptor protein tyrosine phosphatase. Required for maintaining dock/dreadlocks in its non-phosphorylated state. Negative regulator of InR/insulin-like receptor signaling through dephosphorylation of tyrosines when recruited by dock/dreadlocks. This is Tyrosine-protein phosphatase non-receptor type 61F from Drosophila melanogaster (Fruit fly).